Reading from the N-terminus, the 472-residue chain is Ribosomal RNA small subunit methyltransferase F (472 aa).

Residues 123–129 (AAAPGSK), E147, D174, and D192 contribute to the S-adenosyl-L-methionine site. Catalysis depends on C245, which acts as the Nucleophile.

Belongs to the class I-like SAM-binding methyltransferase superfamily. RsmB/NOP family.

It is found in the cytoplasm. It catalyses the reaction cytidine(1407) in 16S rRNA + S-adenosyl-L-methionine = 5-methylcytidine(1407) in 16S rRNA + S-adenosyl-L-homocysteine + H(+). Specifically methylates the cytosine at position 1407 (m5C1407) of 16S rRNA. The polypeptide is Ribosomal RNA small subunit methyltransferase F (Vibrio vulnificus (strain CMCP6)).